Here is a 303-residue protein sequence, read N- to C-terminus: Aliphatic sulfonates import ATP-binding protein SsuB (303 aa).

Positions 39–263 (LHVRQVVKRY…ERGAAGFAQL (225 aa)) constitute an ABC transporter domain. Residue 71–78 (GRSGCGKS) coordinates ATP.

Belongs to the ABC transporter superfamily. Aliphatic sulfonates importer (TC 3.A.1.17.2) family. The complex is composed of two ATP-binding proteins (SsuB), two transmembrane proteins (SsuC) and a solute-binding protein (SsuA).

Its subcellular location is the cell inner membrane. It carries out the reaction ATP + H2O + aliphatic sulfonate-[sulfonate-binding protein]Side 1 = ADP + phosphate + aliphatic sulfonateSide 2 + [sulfonate-binding protein]Side 1.. Its function is as follows. Part of the ABC transporter complex SsuABC involved in aliphatic sulfonates import. Responsible for energy coupling to the transport system. The polypeptide is Aliphatic sulfonates import ATP-binding protein SsuB (Cupriavidus necator (strain ATCC 17699 / DSM 428 / KCTC 22496 / NCIMB 10442 / H16 / Stanier 337) (Ralstonia eutropha)).